Consider the following 379-residue polypeptide: Glutamate 5-kinase (379 aa).

Lys-8 provides a ligand contact to ATP. The substrate site is built by Ser-49, Asp-136, and Asn-148. ATP is bound by residues 168 to 169 (TD) and 211 to 217 (TGGMATK). A PUA domain is found at 276–354 (MGKIYLDAGA…ERIASLLGYM (79 aa)).

Belongs to the glutamate 5-kinase family.

It localises to the cytoplasm. The catalysed reaction is L-glutamate + ATP = L-glutamyl 5-phosphate + ADP. It participates in amino-acid biosynthesis; L-proline biosynthesis; L-glutamate 5-semialdehyde from L-glutamate: step 1/2. In terms of biological role, catalyzes the transfer of a phosphate group to glutamate to form L-glutamate 5-phosphate. The sequence is that of Glutamate 5-kinase from Microcystis aeruginosa (strain NIES-843 / IAM M-2473).